A 107-amino-acid polypeptide reads, in one-letter code: Quaternary ammonium compound-resistance protein QacH (107 aa).

4 helical membrane passes run 1 to 21, 26 to 46, 57 to 77, and 84 to 104; these read MPYL…AFLK, FSKL…FYFL, ITYA…SVLI, and LISI…NTFG.

This sequence belongs to the drug/metabolite transporter (DMT) superfamily. Small multidrug resistance (SMR) (TC 2.A.7.1) family.

The protein localises to the cell membrane. Its function is as follows. Multidrug exporter. Is implicated for the resistance to bacteriocidal quaternary ammonium compounds. The sequence is that of Quaternary ammonium compound-resistance protein QacH (qacH) from Staphylococcus saprophyticus.